The primary structure comprises 340 residues: Biotin synthase (340 aa).

The Radical SAM core domain occupies 47–269 (SELQLSQLLS…VAVARIVCPK (223 aa)). Positions 62, 66, and 69 each coordinate [4Fe-4S] cluster. Residues cysteine 106, cysteine 137, cysteine 197, and arginine 273 each coordinate [2Fe-2S] cluster.

The protein belongs to the radical SAM superfamily. Biotin synthase family. In terms of assembly, homodimer. Requires [4Fe-4S] cluster as cofactor. The cofactor is [2Fe-2S] cluster.

The enzyme catalyses (4R,5S)-dethiobiotin + (sulfur carrier)-SH + 2 reduced [2Fe-2S]-[ferredoxin] + 2 S-adenosyl-L-methionine = (sulfur carrier)-H + biotin + 2 5'-deoxyadenosine + 2 L-methionine + 2 oxidized [2Fe-2S]-[ferredoxin]. Its pathway is cofactor biosynthesis; biotin biosynthesis; biotin from 7,8-diaminononanoate: step 2/2. Catalyzes the conversion of dethiobiotin (DTB) to biotin by the insertion of a sulfur atom into dethiobiotin via a radical-based mechanism. The sequence is that of Biotin synthase from Caulobacter sp. (strain K31).